The chain runs to 228 residues: U1 small nuclear ribonucleoprotein C-2 (228 aa).

The Matrin-type zinc-finger motif lies at Y4–T36. The disordered stretch occupies residues P105–H228. Pro residues-rich tracts occupy residues V107–S156 and L164–S175. Low complexity predominate over residues P178 to A190. Residues P196–P214 are compositionally biased toward pro residues.

The protein belongs to the U1 small nuclear ribonucleoprotein C family. In terms of assembly, U1 snRNP is composed of the 7 core Sm proteins B/B', D1, D2, D3, E, F and G that assemble in a heptameric protein ring on the Sm site of the small nuclear RNA to form the core snRNP, and at least 3 U1 snRNP-specific proteins U1-70K, U1-A and U1-C. U1-C interacts with U1 snRNA and the 5' splice-site region of the pre-mRNA.

It localises to the nucleus. In terms of biological role, component of the spliceosomal U1 snRNP, which is essential for recognition of the pre-mRNA 5' splice-site and the subsequent assembly of the spliceosome. U1-C is directly involved in initial 5' splice-site recognition for both constitutive and regulated alternative splicing. The interaction with the 5' splice-site seems to precede base-pairing between the pre-mRNA and the U1 snRNA. Stimulates commitment or early (E) complex formation by stabilizing the base pairing of the 5' end of the U1 snRNA and the 5' splice-site region. In Sorghum bicolor (Sorghum), this protein is U1 small nuclear ribonucleoprotein C-2.